Reading from the N-terminus, the 219-residue chain is Probable GTP-binding protein EngB (219 aa).

Residues 24–207 form the EngB-type G domain; the sequence is VQPEIAFAGR…HELIESWVRP (184 aa). Residues 32-39, 59-63, 81-84, 148-151, and 186-188 each bind GTP; these read GRSNAGKS, GRTQH, DLPG, TKCD, and FSA. 2 residues coordinate Mg(2+): serine 39 and threonine 61.

Belongs to the TRAFAC class TrmE-Era-EngA-EngB-Septin-like GTPase superfamily. EngB GTPase family. Mg(2+) serves as cofactor.

Functionally, necessary for normal cell division and for the maintenance of normal septation. The polypeptide is Probable GTP-binding protein EngB (Burkholderia ambifaria (strain MC40-6)).